Reading from the N-terminus, the 499-residue chain is tRNA-specific adenosine deaminase 1 (499 aa).

The A to I editase domain occupies 63–498 (SMGTGTKCIG…IRNPPDYHQF (436 aa)). Histidine 87 is a binding site for Zn(2+). Catalysis depends on glutamate 89, which acts as the Proton donor. Arginine 93 and arginine 94 together coordinate 1D-myo-inositol hexakisphosphate. Cysteine 142 lines the Zn(2+) pocket. Disordered regions lie at residues 170 to 194 (PVQETENLEDSKDKRNCEDPASPVA) and 212 to 237 (HHGTQESGPVKPDVSSSDLTKEEPDA). The segment covering 178-187 (EDSKDKRNCE) has biased composition (basic and acidic residues). A Phosphoserine modification is found at serine 191. Cysteine 294 contacts Zn(2+). Residues lysine 297, arginine 300, lysine 430, and lysine 466 each coordinate 1D-myo-inositol hexakisphosphate.

The protein belongs to the ADAT1 family. Requires 1D-myo-inositol hexakisphosphate as cofactor.

The enzyme catalyses adenosine(37) in tRNA(Ala) + H2O + H(+) = inosine(37) in tRNA(Ala) + NH4(+). Functionally, specifically deaminates adenosine-37 to inosine in tRNA-Ala. The polypeptide is tRNA-specific adenosine deaminase 1 (Adat1) (Mus musculus (Mouse)).